The chain runs to 310 residues: Methionyl-tRNA formyltransferase (310 aa).

A (6S)-5,6,7,8-tetrahydrofolate-binding site is contributed by S111–P114.

This sequence belongs to the Fmt family.

It carries out the reaction L-methionyl-tRNA(fMet) + (6R)-10-formyltetrahydrofolate = N-formyl-L-methionyl-tRNA(fMet) + (6S)-5,6,7,8-tetrahydrofolate + H(+). Its function is as follows. Attaches a formyl group to the free amino group of methionyl-tRNA(fMet). The formyl group appears to play a dual role in the initiator identity of N-formylmethionyl-tRNA by promoting its recognition by IF2 and preventing the misappropriation of this tRNA by the elongation apparatus. This Rhodopseudomonas palustris (strain BisB18) protein is Methionyl-tRNA formyltransferase.